The primary structure comprises 331 residues: 6-phosphogluconolactonase (331 aa).

Residue K287 is modified to N6-acetyllysine.

It belongs to the cycloisomerase 2 family.

It carries out the reaction 6-phospho-D-glucono-1,5-lactone + H2O = 6-phospho-D-gluconate + H(+). It participates in carbohydrate degradation; pentose phosphate pathway; D-ribulose 5-phosphate from D-glucose 6-phosphate (oxidative stage): step 2/3. Functionally, catalyzes the hydrolysis of 6-phosphogluconolactone to 6-phosphogluconate. This chain is 6-phosphogluconolactonase, found in Escherichia coli O157:H7.